The following is a 121-amino-acid chain: Small ribosomal subunit protein uS13 (121 aa).

The disordered stretch occupies residues Gly-94–Lys-121. Over residues Ala-106 to Lys-121 the composition is skewed to basic residues.

It belongs to the universal ribosomal protein uS13 family. As to quaternary structure, part of the 30S ribosomal subunit. Forms a loose heterodimer with protein S19. Forms two bridges to the 50S subunit in the 70S ribosome.

In terms of biological role, located at the top of the head of the 30S subunit, it contacts several helices of the 16S rRNA. In the 70S ribosome it contacts the 23S rRNA (bridge B1a) and protein L5 of the 50S subunit (bridge B1b), connecting the 2 subunits; these bridges are implicated in subunit movement. Contacts the tRNAs in the A and P-sites. The polypeptide is Small ribosomal subunit protein uS13 (Anoxybacillus flavithermus (strain DSM 21510 / WK1)).